Consider the following 316-residue polypeptide: 4-amino-5-hydroxymethyl-2-methylpyrimidine phosphate synthase (316 aa).

K66 carries the N6-(pyridoxal phosphate)lysine modification. Residue H70 is part of the active site. Position 118–121 (118–121) interacts with pyridoxal 5'-phosphate; sequence GEFG. Positions 191-195 match the CCCFC; essential for catalytic activity, may be the site of iron coordination motif; sequence CCCFC.

This sequence belongs to the NMT1/THI5 family. As to quaternary structure, homodimer. Fe cation serves as cofactor.

The catalysed reaction is N(6)-(pyridoxal phosphate)-L-lysyl-[4-amino-5-hydroxymethyl-2-methylpyrimidine phosphate synthase] + L-histidyl-[4-amino-5-hydroxymethyl-2-methylpyrimidine phosphate synthase] + 2 Fe(3+) + 4 H2O = L-lysyl-[4-amino-5-hydroxymethyl-2-methylpyrimidine phosphate synthase] + (2S)-2-amino-5-hydroxy-4-oxopentanoyl-[4-amino-5-hydroxymethyl-2-methylpyrimidine phosphate synthase] + 4-amino-2-methyl-5-(phosphooxymethyl)pyrimidine + 3-oxopropanoate + 2 Fe(2+) + 2 H(+). The protein operates within cofactor biosynthesis; thiamine diphosphate biosynthesis. Functionally, responsible for the formation of the pyrimidine heterocycle in the thiamine biosynthesis pathway. Catalyzes the formation of hydroxymethylpyrimidine phosphate (HMP-P) from histidine and pyridoxal phosphate (PLP). The protein uses PLP and the active site histidine to form HMP-P, generating an inactive enzyme. The enzyme can only undergo a single turnover, which suggests it is a suicide enzyme. This is 4-amino-5-hydroxymethyl-2-methylpyrimidine phosphate synthase from Legionella pneumophila subsp. pneumophila (strain Philadelphia 1 / ATCC 33152 / DSM 7513).